A 405-amino-acid polypeptide reads, in one-letter code: Phosphopentomutase (405 aa).

The Mn(2+) site is built by D10, D303, H308, D344, H345, and H356.

This sequence belongs to the phosphopentomutase family. It depends on Mn(2+) as a cofactor.

It localises to the cytoplasm. It catalyses the reaction 2-deoxy-alpha-D-ribose 1-phosphate = 2-deoxy-D-ribose 5-phosphate. The enzyme catalyses alpha-D-ribose 1-phosphate = D-ribose 5-phosphate. It participates in carbohydrate degradation; 2-deoxy-D-ribose 1-phosphate degradation; D-glyceraldehyde 3-phosphate and acetaldehyde from 2-deoxy-alpha-D-ribose 1-phosphate: step 1/2. Its function is as follows. Isomerase that catalyzes the conversion of deoxy-ribose 1-phosphate (dRib-1-P) and ribose 1-phosphate (Rib-1-P) to deoxy-ribose 5-phosphate (dRib-5-P) and ribose 5-phosphate (Rib-5-P), respectively. This is Phosphopentomutase from Shewanella loihica (strain ATCC BAA-1088 / PV-4).